The chain runs to 302 residues: Late embryogenesis abundant protein D-29 (302 aa).

Disordered regions lie at residues His-25–Tyr-93, Val-168–Ser-193, and Ala-205–Asn-302. Composition is skewed to basic and acidic residues over residues Arg-34–Asn-70 and Ala-79–Tyr-93. Residues Ala-205 to Lys-286 are compositionally biased toward basic and acidic residues.

This sequence belongs to the LEA type 1 family.

LEA protein are late embryonic proteins abundant in higher plant seed embryos. There are two subsets of LEA proteins (5a and 5b), the first ones are expressed when the cotyledon weight reach 80 mg and the second set are expressed above 100 mg. The function of those proteins is not known. This is Late embryogenesis abundant protein D-29 from Gossypium hirsutum (Upland cotton).